A 198-amino-acid polypeptide reads, in one-letter code: Elongation factor Ts (198 aa).

The interval 81-84 (TDFV) is involved in Mg(2+) ion dislocation from EF-Tu.

The protein belongs to the EF-Ts family.

It localises to the cytoplasm. Its function is as follows. Associates with the EF-Tu.GDP complex and induces the exchange of GDP to GTP. It remains bound to the aminoacyl-tRNA.EF-Tu.GTP complex up to the GTP hydrolysis stage on the ribosome. This chain is Elongation factor Ts, found in Dictyoglomus turgidum (strain DSM 6724 / Z-1310).